The sequence spans 264 residues: MNTIHATAIIDPGVTLGDKVTIGPYTVIEDDVEIGEGTRIGPHVHIASGARIGSACRIHAGAVLATEPQDLKYAGEKTQLIVGDRTVIRECVTLNRGTKASGRTVVGSDTLVMSYVHAGHDCVIGNHVVIANSVQFGGHCEVGDYAVIGGLTGVHQFVRIGRYSMVGGIARASLDVPPFVMAGGHASFRYEGLNSLGLKRRGFTAEKISMIKDVYRIIFQSGLLLSNALEKVRTDFPAEPEIVEILRFFDSGTHGRKFLRPFNS.

The protein belongs to the transferase hexapeptide repeat family. LpxA subfamily. As to quaternary structure, homotrimer.

Its subcellular location is the cytoplasm. The enzyme catalyses a (3R)-hydroxyacyl-[ACP] + UDP-N-acetyl-alpha-D-glucosamine = a UDP-3-O-[(3R)-3-hydroxyacyl]-N-acetyl-alpha-D-glucosamine + holo-[ACP]. It participates in glycolipid biosynthesis; lipid IV(A) biosynthesis; lipid IV(A) from (3R)-3-hydroxytetradecanoyl-[acyl-carrier-protein] and UDP-N-acetyl-alpha-D-glucosamine: step 1/6. Functionally, involved in the biosynthesis of lipid A, a phosphorylated glycolipid that anchors the lipopolysaccharide to the outer membrane of the cell. The protein is Acyl-[acyl-carrier-protein]--UDP-N-acetylglucosamine O-acyltransferase of Chlorobium phaeobacteroides (strain DSM 266 / SMG 266 / 2430).